A 953-amino-acid polypeptide reads, in one-letter code: Isoleucine--tRNA ligase (953 aa).

Residues 57–67 (PYANGDIHIGH) carry the 'HIGH' region motif. Position 582 (Glu-582) interacts with L-isoleucyl-5'-AMP. The 'KMSKS' region motif lies at 623-627 (KMSKS). ATP is bound at residue Lys-626. Zn(2+) contacts are provided by Cys-916, Cys-919, Cys-936, and Cys-939.

It belongs to the class-I aminoacyl-tRNA synthetase family. IleS type 1 subfamily. As to quaternary structure, monomer. Requires Zn(2+) as cofactor.

Its subcellular location is the cytoplasm. It catalyses the reaction tRNA(Ile) + L-isoleucine + ATP = L-isoleucyl-tRNA(Ile) + AMP + diphosphate. Functionally, catalyzes the attachment of isoleucine to tRNA(Ile). As IleRS can inadvertently accommodate and process structurally similar amino acids such as valine, to avoid such errors it has two additional distinct tRNA(Ile)-dependent editing activities. One activity is designated as 'pretransfer' editing and involves the hydrolysis of activated Val-AMP. The other activity is designated 'posttransfer' editing and involves deacylation of mischarged Val-tRNA(Ile). The polypeptide is Isoleucine--tRNA ligase (Bordetella avium (strain 197N)).